The chain runs to 145 residues: 3-dehydroquinate dehydratase (145 aa).

Tyr-22 (proton acceptor) is an active-site residue. Substrate is bound by residues Asn-73, His-79, and Asp-86. The Proton donor role is filled by His-99. Substrate is bound by residues Leu-100–Ser-101 and Arg-110.

The protein belongs to the type-II 3-dehydroquinase family. As to quaternary structure, homododecamer.

The catalysed reaction is 3-dehydroquinate = 3-dehydroshikimate + H2O. Its pathway is metabolic intermediate biosynthesis; chorismate biosynthesis; chorismate from D-erythrose 4-phosphate and phosphoenolpyruvate: step 3/7. Catalyzes a trans-dehydration via an enolate intermediate. The protein is 3-dehydroquinate dehydratase of Prochlorococcus marinus (strain NATL1A).